We begin with the raw amino-acid sequence, 203 residues long: Ras-related protein Rab5A (203 aa).

Residue 18 to 26 participates in GTP binding; sequence GDVGTGKSS. An Effector region motif is present at residues 40 to 48; the sequence is QESTIGAAF. GTP is bound by residues 66–70, 124–127, and 154–155; these read DTAGQ, NKAD, and SA. Residues Cys201 and Cys202 are each lipidated (S-geranylgeranyl cysteine).

It belongs to the small GTPase superfamily. Rab family. As to quaternary structure, interacts with VPS9A. Interacts with NSF and RBP-L. Highly expressed in roots. Expressed at low levels in shoots, flowers and grains.

It is found in the prevacuolar compartment membrane. It localises to the golgi apparatus membrane. Its subcellular location is the cell membrane. The protein localises to the protein storage vacuole membrane. Plays an important role in intracellular trafficking of seed storage proteins to the protein storage vacuoles (PSVs). Participates in the transport of the proglutelins from the Golgi apparatus to the PSVs in endosperm. Functions cooperatively with VPS9A to regulate post-Golgi dense vesicle-mediated transport of storage proteins to the type II protein bodies (PBII) protein storage vacuoles in developing endosperm. Involved in the maintenance of the general structural organization of the endomembrane system in developing endosperm. Binds GTP in vitro. Forms a quaternary complex with the two glutelin zipcode RNA-binding proteins RBP-L and RBP-P, and the membrane trafficking factor NSF. This quaternay complex carries glutelin mRNAs for active transport on endosomes to the cortical endoplasmic reticulum membrane, and enables endosome-mediated glutelin mRNA transport in endosperm cells. In Oryza sativa subsp. japonica (Rice), this protein is Ras-related protein Rab5A.